Consider the following 54-residue polypeptide: Large ribosomal subunit protein bL33 (54 aa).

This sequence belongs to the bacterial ribosomal protein bL33 family.

The chain is Large ribosomal subunit protein bL33 from Thermus thermophilus (strain ATCC BAA-163 / DSM 7039 / HB27).